The following is a 172-amino-acid chain: Keratin-associated protein 13-1 (172 aa).

A run of 5 repeats spans residues 46 to 55, 56 to 65, 66 to 75, 76 to 85, and 92 to 101. The segment at 46 to 101 is 5 X 10 AA approximate repeats; the sequence is CQLGSSLYRGCQQTCWEPTSCQTSYVESSPCQTSCYRPRTSLLCSPCQTTYSGSLG.

Belongs to the PMG family. Interacts with hair keratins. In terms of tissue distribution, weak expression seen in the late matrix and entire cortex area of the hair follicle.

Functionally, in the hair cortex, hair keratin intermediate filaments are embedded in an interfilamentous matrix, consisting of hair keratin-associated proteins (KRTAP), which are essential for the formation of a rigid and resistant hair shaft through their extensive disulfide bond cross-linking with abundant cysteine residues of hair keratins. The matrix proteins include the high-sulfur and high-glycine-tyrosine keratins. This is Keratin-associated protein 13-1 (KRTAP13-1) from Homo sapiens (Human).